The chain runs to 270 residues: MVKVAVTGALGRMGSGIIQKILETEGLNVVAAIDIPNHPKKGHDIGELIGIGKLGVNLSTSDELESVLKSSGAEVLVDFTAPAPCVNTAKIASKCGVNLVIGTTGFTKEQKDEMEKAIFENKVAATISQNYAVGVNIFFKTLELLAQKLGEYDIEIVEMHHKFKKDAPSGTALRAAEIIQENLNRNSNLIYGREGITGERTKEEICIHALRGGDVVGDHTVIFANDGERLELSHKASSRQSFIAGVILAIKFVGTKKEGIFNTFDVLGLN.

Residues 8-13 (GALGRM), D34, 102-104 (GTT), and 128-131 (SQNY) contribute to the NAD(+) site. The active-site Proton donor/acceptor is the H160. A (S)-2,3,4,5-tetrahydrodipicolinate-binding site is contributed by H161. Residue K164 is the Proton donor of the active site. (S)-2,3,4,5-tetrahydrodipicolinate is bound at residue 170 to 171 (GT).

The protein belongs to the DapB family.

It is found in the cytoplasm. The catalysed reaction is (S)-2,3,4,5-tetrahydrodipicolinate + NAD(+) + H2O = (2S,4S)-4-hydroxy-2,3,4,5-tetrahydrodipicolinate + NADH + H(+). It catalyses the reaction (S)-2,3,4,5-tetrahydrodipicolinate + NADP(+) + H2O = (2S,4S)-4-hydroxy-2,3,4,5-tetrahydrodipicolinate + NADPH + H(+). It functions in the pathway amino-acid biosynthesis; L-lysine biosynthesis via DAP pathway; (S)-tetrahydrodipicolinate from L-aspartate: step 4/4. In terms of biological role, catalyzes the conversion of 4-hydroxy-tetrahydrodipicolinate (HTPA) to tetrahydrodipicolinate. The sequence is that of 4-hydroxy-tetrahydrodipicolinate reductase from Methanococcus vannielii (strain ATCC 35089 / DSM 1224 / JCM 13029 / OCM 148 / SB).